Here is a 201-residue protein sequence, read N- to C-terminus: Recombination protein RecR (201 aa).

A C4-type zinc finger spans residues Cys55–Cys70. Residues Gly78–Pro173 enclose the Toprim domain.

This sequence belongs to the RecR family.

May play a role in DNA repair. It seems to be involved in an RecBC-independent recombinational process of DNA repair. It may act with RecF and RecO. This chain is Recombination protein RecR, found in Treponema pallidum (strain Nichols).